A 184-amino-acid chain; its full sequence is Sec-independent protein translocase protein TatB (184 aa).

A helical membrane pass occupies residues 1–21; that stretch reads MFDIGFSELVLLFVVGLIVLG. Acidic residues predominate over residues 149 to 168; sequence AEEGEPMLEMGESDFSEDEQ. The interval 149–184 is disordered; the sequence is AEEGEPMLEMGESDFSEDEQATASSNETIENIKEKV.

This sequence belongs to the TatB family. In terms of assembly, the Tat system comprises two distinct complexes: a TatABC complex, containing multiple copies of TatA, TatB and TatC subunits, and a separate TatA complex, containing only TatA subunits. Substrates initially bind to the TatABC complex, which probably triggers association of the separate TatA complex to form the active translocon.

Its subcellular location is the cell inner membrane. Part of the twin-arginine translocation (Tat) system that transports large folded proteins containing a characteristic twin-arginine motif in their signal peptide across membranes. Together with TatC, TatB is part of a receptor directly interacting with Tat signal peptides. TatB may form an oligomeric binding site that transiently accommodates folded Tat precursor proteins before their translocation. The protein is Sec-independent protein translocase protein TatB of Histophilus somni (strain 129Pt) (Haemophilus somnus).